A 321-amino-acid chain; its full sequence is Glucokinase (321 aa).

8–13 serves as a coordination point for ATP; that stretch reads GDVGGT.

This sequence belongs to the bacterial glucokinase family.

It localises to the cytoplasm. It carries out the reaction D-glucose + ATP = D-glucose 6-phosphate + ADP + H(+). The protein is Glucokinase of Salmonella choleraesuis (strain SC-B67).